Here is a 960-residue protein sequence, read N- to C-terminus: Lon protease homolog, mitochondrial (960 aa).

The N-terminal 56 residues, 1–56 (MYRAGALVLRSATLRRTRFLAAHQNFATISSQRSSVLLAKSLESSIGGAGNQKKFY), are a transit peptide targeting the mitochondrion. In terms of domain architecture, Lon N-terminal spans 92–352 (VPILAINRYP…IALLLIQKEK (261 aa)). The tract at residues 195 to 250 (PKTDTPLNGRRARGKRAGLPPTPPPTPPLSTPTSAPEASATSPEEKEEKKDPERKG) is disordered. The span at 214-224 (PPTPPPTPPLS) shows a compositional bias: pro residues. The segment covering 225 to 236 (TPTSAPEASATS) has biased composition (low complexity). The segment covering 237 to 250 (PEEKEEKKDPERKG) has biased composition (basic and acidic residues). ATP is bound at residue 505-512 (GPPGVGKT). Residues 712–748 (EQQPEDEQPAATTAISENSDAEPVSTPSDPPTFTPEK) are disordered. Positions 773–960 (VTPPGVIMGL…YDELYEHLFQ (188 aa)) constitute a Lon proteolytic domain. Catalysis depends on residues Ser867 and Lys910.

Belongs to the peptidase S16 family. Homohexamer or homoheptamer. Organized in a ring with a central cavity.

It localises to the mitochondrion matrix. It carries out the reaction Hydrolysis of proteins in presence of ATP.. ATP-dependent serine protease that mediates the selective degradation of misfolded, unassembled or oxidatively damaged polypeptides as well as certain short-lived regulatory proteins in the mitochondrial matrix. May also have a chaperone function in the assembly of inner membrane protein complexes. Participates in the regulation of mitochondrial gene expression and in the maintenance of the integrity of the mitochondrial genome. Binds to mitochondrial DNA in a site-specific manner. This Caenorhabditis briggsae protein is Lon protease homolog, mitochondrial.